Reading from the N-terminus, the 87-residue chain is Small ribosomal subunit protein uS17 (87 aa).

This sequence belongs to the universal ribosomal protein uS17 family. In terms of assembly, part of the 30S ribosomal subunit.

Its function is as follows. One of the primary rRNA binding proteins, it binds specifically to the 5'-end of 16S ribosomal RNA. This is Small ribosomal subunit protein uS17 from Bacillus cereus (strain ATCC 14579 / DSM 31 / CCUG 7414 / JCM 2152 / NBRC 15305 / NCIMB 9373 / NCTC 2599 / NRRL B-3711).